The sequence spans 98 residues: Integration host factor subunit alpha (98 aa).

Positions 54-74 (LRDKASRPGRNPKTGENIPVS) are disordered.

Belongs to the bacterial histone-like protein family. In terms of assembly, heterodimer of an alpha and a beta chain.

Its function is as follows. This protein is one of the two subunits of integration host factor, a specific DNA-binding protein that functions in genetic recombination as well as in transcriptional and translational control. This chain is Integration host factor subunit alpha, found in Actinobacillus succinogenes (strain ATCC 55618 / DSM 22257 / CCUG 43843 / 130Z).